Consider the following 1438-residue polypeptide: DNA-directed RNA polymerase subunit beta' (1438 aa).

The Zn(2+) site is built by C70, C72, C85, and C88. D461, D463, and D465 together coordinate Mg(2+). C821, C895, C902, and C905 together coordinate Zn(2+). The span at 1413-1427 (DAMAAAMGGDSAGGD) shows a compositional bias: low complexity. A disordered region spans residues 1413-1438 (DAMAAAMGGDSAGGDTKPEAPEASEE).

The protein belongs to the RNA polymerase beta' chain family. In terms of assembly, the RNAP catalytic core consists of 2 alpha, 1 beta, 1 beta' and 1 omega subunit. When a sigma factor is associated with the core the holoenzyme is formed, which can initiate transcription. Requires Mg(2+) as cofactor. Zn(2+) serves as cofactor.

It catalyses the reaction RNA(n) + a ribonucleoside 5'-triphosphate = RNA(n+1) + diphosphate. DNA-dependent RNA polymerase catalyzes the transcription of DNA into RNA using the four ribonucleoside triphosphates as substrates. The protein is DNA-directed RNA polymerase subunit beta' of Erythrobacter litoralis (strain HTCC2594).